Here is a 339-residue protein sequence, read N- to C-terminus: tRNA-specific 2-thiouridylase MnmA (339 aa).

ATP-binding positions include Ala8–Ser15 and Met34. Cys94 serves as the catalytic Nucleophile. The cysteines at positions 94 and 188 are disulfide-linked. ATP is bound at residue Gly118. An interaction with tRNA region spans residues Lys136–Gln138. Cys188 serves as the catalytic Cysteine persulfide intermediate. An interaction with tRNA region spans residues Arg290–Tyr291.

It belongs to the MnmA/TRMU family.

Its subcellular location is the cytoplasm. The enzyme catalyses S-sulfanyl-L-cysteinyl-[protein] + uridine(34) in tRNA + AH2 + ATP = 2-thiouridine(34) in tRNA + L-cysteinyl-[protein] + A + AMP + diphosphate + H(+). Catalyzes the 2-thiolation of uridine at the wobble position (U34) of tRNA, leading to the formation of s(2)U34. The polypeptide is tRNA-specific 2-thiouridylase MnmA (Nitratiruptor sp. (strain SB155-2)).